The primary structure comprises 440 residues: MESQQLSQHSHISHGSACASVTSKEVHTNQDPLDVSASKTEECEKASTKANSQQTTTPASSAVPENPHHASPQPASVPPPQNGPYPQQCMMTQNQANPSGWSFYGHPSMIPYTPYQMSPMYFPPGPQSQFPQYPSSVGTPLSTPSPESGNTFTDSSSADSDMTSTKKYVRPPPMLTSPNDFPNWVKTYIKFLQNSNLGGIIPTVNGKPVRQITDDELTFLYNTFQIFAPSQFLPTWVKDILSVDYTDIMKILSKSIEKMQSDTQEANDIVTLANLQYNGSTPADAFETKVTNIIDRLNNNGIHINNKVACQLIMRGLSGEYKFLRYTRHRHLNMTVAELFLDIHAIYEEQQGSRNSKPNYRRNLSDEKNDSRSYTNTTKPKVIARNPQKTNNSKSKTARAHNVSTSNNSPSTDNDSISKSTTEPIQLNNKHDLHLRPGTY.

Residues 1 to 16 (MESQQLSQHSHISHGS) show a composition bias toward low complexity. Disordered stretches follow at residues 1 to 93 (MESQ…MMTQ), 126 to 173 (PQSQ…RPPP), and 352 to 440 (GSRN…PGTY). 2 stretches are compositionally biased toward polar residues: residues 48 to 60 (TKAN…TPAS) and 127 to 152 (QSQF…GNTF). The segment covering 153–165 (TDSSSADSDMTST) has biased composition (low complexity). The interval 299 to 401 (NNGIHINNKV…NSKSKTARAH (103 aa)) is RNA-binding. A compositionally biased stretch (low complexity) spans 402–418 (NVSTSNNSPSTDNDSIS). S416 bears the Phosphoserine mark. Positions 419–428 (KSTTEPIQLN) are enriched in polar residues. Residues 429–440 (NKHDLHLRPGTY) are compositionally biased toward basic and acidic residues.

As to quaternary structure, homotrimer.

The protein resides in the cytoplasm. Its function is as follows. Capsid protein (CA) is the structural component of the virus-like particle (VLP), forming the shell that encapsulates the retrotransposons dimeric RNA genome. The particles are assembled from trimer-clustered units and there are holes in the capsid shells that allow for the diffusion of macromolecules. CA also has nucleocapsid-like chaperone activity, promoting primer tRNA(i)-Met annealing to the multipartite primer-binding site (PBS), dimerization of Ty1 RNA and initiation of reverse transcription. The chain is Transposon Ty1-JR1 Gag polyprotein (TY1A-JR1) from Saccharomyces cerevisiae (strain ATCC 204508 / S288c) (Baker's yeast).